A 338-amino-acid chain; its full sequence is Ornithine carbamoyltransferase, catabolic (338 aa).

Residues 58 to 61, Gln-85, Arg-109, and 136 to 139 contribute to the carbamoyl phosphate site; these read STRT and HPTQ. L-ornithine-binding positions include Asn-168, Asp-232, and 236 to 237; that span reads SM. Carbamoyl phosphate contacts are provided by residues 273–274 and Arg-318; that span reads CL.

This sequence belongs to the aspartate/ornithine carbamoyltransferase superfamily. OTCase family.

It is found in the cytoplasm. The enzyme catalyses carbamoyl phosphate + L-ornithine = L-citrulline + phosphate + H(+). It functions in the pathway amino-acid degradation; L-arginine degradation via ADI pathway; carbamoyl phosphate from L-arginine: step 2/2. In terms of biological role, reversibly catalyzes the transfer of the carbamoyl group from carbamoyl phosphate (CP) to the N(epsilon) atom of ornithine (ORN) to produce L-citrulline. The protein is Ornithine carbamoyltransferase, catabolic of Streptococcus pneumoniae serotype 4 (strain ATCC BAA-334 / TIGR4).